Here is a 58-residue protein sequence, read N- to C-terminus: Ikitoxin (58 aa).

The 56-residue stretch at 3 to 58 folds into the LCN-type CS-alpha/beta domain; that stretch reads VPGNYPLDKDGNTYKCFLLGENEECLNVCKLHGVQYGYCYASKCWCEYLEDDKDSV. 3 cysteine pairs are disulfide-bonded: Cys18-Cys41, Cys27-Cys46, and Cys31-Cys48.

In terms of tissue distribution, expressed by the venom gland.

The protein localises to the secreted. Beta toxins bind voltage-independently at site-4 of sodium channels (Nav) and shift the voltage of activation toward more negative potentials thereby affecting sodium channel activation and promoting spontaneous and repetitive firing. Does not produce effect when administered to blowfly and cabbage looper larvae. In mice, does not produce convulsions, tremors, increased ventilation nor death. In Parabuthus transvaalicus (Transvaal thick-tailed scorpion), this protein is Ikitoxin.